The chain runs to 268 residues: Small ribosomal subunit protein eS1 (268 aa).

The disordered stretch occupies residues 1-21; it reads MAVGKNKGLSKGGKKGGKKKV.

It belongs to the eukaryotic ribosomal protein eS1 family. Component of the small ribosomal subunit. Mature ribosomes consist of a small (40S) and a large (60S) subunit. The 40S subunit contains about 33 different proteins and 1 molecule of RNA (18S). The 60S subunit contains about 49 different proteins and 3 molecules of RNA (28S, 5.8S and 5S).

The protein localises to the cytoplasm. Its function is as follows. Essential for oogenesis; required for late follicle cell development. The chain is Small ribosomal subunit protein eS1 from Drosophila mojavensis (Fruit fly).